The sequence spans 571 residues: Proline--tRNA ligase (571 aa).

It belongs to the class-II aminoacyl-tRNA synthetase family. ProS type 1 subfamily. Homodimer.

Its subcellular location is the cytoplasm. The catalysed reaction is tRNA(Pro) + L-proline + ATP = L-prolyl-tRNA(Pro) + AMP + diphosphate. Catalyzes the attachment of proline to tRNA(Pro) in a two-step reaction: proline is first activated by ATP to form Pro-AMP and then transferred to the acceptor end of tRNA(Pro). As ProRS can inadvertently accommodate and process non-cognate amino acids such as alanine and cysteine, to avoid such errors it has two additional distinct editing activities against alanine. One activity is designated as 'pretransfer' editing and involves the tRNA(Pro)-independent hydrolysis of activated Ala-AMP. The other activity is designated 'posttransfer' editing and involves deacylation of mischarged Ala-tRNA(Pro). The misacylated Cys-tRNA(Pro) is not edited by ProRS. The polypeptide is Proline--tRNA ligase (Acinetobacter baumannii (strain ATCC 17978 / DSM 105126 / CIP 53.77 / LMG 1025 / NCDC KC755 / 5377)).